The chain runs to 188 residues: dCTP deaminase (188 aa).

DCTP contacts are provided by residues lysine 111 to arginine 116, threonine 135 to glutamate 137, glutamine 156, tyrosine 170, and glutamine 180. The Proton donor/acceptor role is filled by glutamate 137.

Belongs to the dCTP deaminase family. In terms of assembly, homotrimer.

It catalyses the reaction dCTP + H2O + H(+) = dUTP + NH4(+). Its pathway is pyrimidine metabolism; dUMP biosynthesis; dUMP from dCTP (dUTP route): step 1/2. Catalyzes the deamination of dCTP to dUTP. This chain is dCTP deaminase, found in Neisseria gonorrhoeae (strain ATCC 700825 / FA 1090).